Consider the following 994-residue polypeptide: Bifunctional glutamine synthetase adenylyltransferase/adenylyl-removing enzyme (994 aa).

An adenylyl removase region spans residues 1 to 487 (MVVTKLATQR…LHTKLFYQPL (487 aa)). Residues 492–994 (GPTGLEIAHG…KAVVRKVFGS (503 aa)) form an adenylyl transferase region.

Belongs to the GlnE family. The cofactor is Mg(2+).

The enzyme catalyses [glutamine synthetase]-O(4)-(5'-adenylyl)-L-tyrosine + phosphate = [glutamine synthetase]-L-tyrosine + ADP. It carries out the reaction [glutamine synthetase]-L-tyrosine + ATP = [glutamine synthetase]-O(4)-(5'-adenylyl)-L-tyrosine + diphosphate. Its function is as follows. Involved in the regulation of glutamine synthetase GlnA, a key enzyme in the process to assimilate ammonia. When cellular nitrogen levels are high, the C-terminal adenylyl transferase (AT) inactivates GlnA by covalent transfer of an adenylyl group from ATP to specific tyrosine residue of GlnA, thus reducing its activity. Conversely, when nitrogen levels are low, the N-terminal adenylyl removase (AR) activates GlnA by removing the adenylyl group by phosphorolysis, increasing its activity. The regulatory region of GlnE binds the signal transduction protein PII (GlnB) which indicates the nitrogen status of the cell. The protein is Bifunctional glutamine synthetase adenylyltransferase/adenylyl-removing enzyme of Mycobacterium bovis (strain ATCC BAA-935 / AF2122/97).